Reading from the N-terminus, the 215-residue chain is MAFALSLPSLPKRYQPAAIWSLYVIGLCPGLWYFYLAATGGLGFNPVKDFEHLLGIWALRFLCLGLLVTPLRDLFNVNLIAYRRALGLIAFYYVLAHFTVYLVLDRGLILGSIAGDILKRPYIMLGMAGLIILIPLALTSNRWSIRRLGSRWNTLHKLVYLVLIVGVLHFVLARKSITLEPVFYISTMVVLLGYRLVRPSIMTMKRNKRARPVRT.

The next 6 membrane-spanning stretches (helical) occupy residues 17-37 (AAIWSLYVIGLCPGLWYFYLA), 50-70 (FEHLLGIWALRFLCLGLLVTP), 85-105 (ALGLIAFYYVLAHFTVYLVLD), 121-141 (PYIMLGMAGLIILIPLALTSN), 152-172 (WNTLHKLVYLVLIVGVLHFVL), and 177-197 (ITLEPVFYISTMVVLLGYRLV).

Belongs to the MsrQ family. Heterodimer of a catalytic subunit (MsrP) and a heme-binding subunit (MsrQ). Requires FMN as cofactor. It depends on heme b as a cofactor.

The protein localises to the cell inner membrane. Its function is as follows. Part of the MsrPQ system that repairs oxidized periplasmic proteins containing methionine sulfoxide residues (Met-O), using respiratory chain electrons. Thus protects these proteins from oxidative-stress damage caused by reactive species of oxygen and chlorine generated by the host defense mechanisms. MsrPQ is essential for the maintenance of envelope integrity under bleach stress, rescuing a wide series of structurally unrelated periplasmic proteins from methionine oxidation. MsrQ provides electrons for reduction to the reductase catalytic subunit MsrP, using the quinone pool of the respiratory chain. The protein is Protein-methionine-sulfoxide reductase heme-binding subunit MsrQ of Agrobacterium fabrum (strain C58 / ATCC 33970) (Agrobacterium tumefaciens (strain C58)).